The chain runs to 301 residues: Homoserine O-acetyltransferase (301 aa).

Cysteine 142 (acyl-thioester intermediate) is an active-site residue. Substrate-binding residues include lysine 163 and serine 192. Residue histidine 235 is the Proton acceptor of the active site. Glutamate 237 is a catalytic residue. Substrate is bound at residue arginine 249.

Belongs to the MetA family.

It localises to the cytoplasm. It catalyses the reaction L-homoserine + acetyl-CoA = O-acetyl-L-homoserine + CoA. The protein operates within amino-acid biosynthesis; L-methionine biosynthesis via de novo pathway; O-acetyl-L-homoserine from L-homoserine: step 1/1. Transfers an acetyl group from acetyl-CoA to L-homoserine, forming acetyl-L-homoserine. This is Homoserine O-acetyltransferase from Bacillus cytotoxicus (strain DSM 22905 / CIP 110041 / 391-98 / NVH 391-98).